The sequence spans 960 residues: CWF19-like protein 2 (960 aa).

4 disordered regions span residues 1 to 222 (MAAY…AGVV), 261 to 552 (EFQK…ELIL), 624 to 648 (AWPV…AIET), and 712 to 731 (AQKE…AVQE). Residues 13-101 (SIKSRKESKR…KKAKKEKKDE (89 aa)) adopt a coiled-coil conformation. Positions 16 to 52 (SRKESKREERERVIQKAKEKFEKEERRKAERKARGED) are enriched in basic and acidic residues. The segment covering 73–96 (KTKKAKKEKKAKKSKKEKKKKAKK) has biased composition (basic residues). A compositionally biased stretch (acidic residues) spans 108-117 (SSEDSEDEWV). A compositionally biased stretch (low complexity) spans 135 to 146 (EATPSSSSASNN). Residues 163-279 (SVADRRAQKE…EDAAYGERRD (117 aa)) are a coiled coil. Basic and acidic residues-rich tracts occupy residues 165 to 181 (ADRR…ERQK), 261 to 372 (EFQK…DDLS), and 404 to 417 (KPVD…EAGF). The segment covering 507–518 (SAVQDSETPTLQ) has biased composition (polar residues). Positions 540–605 (SESEEEEEEE…IKDQSKRASK (66 aa)) form a coiled coil. Over residues 541–552 (ESEEEEEEELIL) the composition is skewed to acidic residues. Positions 713–731 (QKERAGRDEERQRNKAVQE) are enriched in basic and acidic residues.

It belongs to the CWF19 family.

This is CWF19-like protein 2 (cwf19l2) from Danio rerio (Zebrafish).